Reading from the N-terminus, the 238-residue chain is tRNA1(Val) (adenine(37)-N6)-methyltransferase (238 aa).

Belongs to the methyltransferase superfamily. tRNA (adenine-N(6)-)-methyltransferase family.

It is found in the cytoplasm. It catalyses the reaction adenosine(37) in tRNA1(Val) + S-adenosyl-L-methionine = N(6)-methyladenosine(37) in tRNA1(Val) + S-adenosyl-L-homocysteine + H(+). Functionally, specifically methylates the adenine in position 37 of tRNA(1)(Val) (anticodon cmo5UAC). The protein is tRNA1(Val) (adenine(37)-N6)-methyltransferase of Cytophaga hutchinsonii (strain ATCC 33406 / DSM 1761 / CIP 103989 / NBRC 15051 / NCIMB 9469 / D465).